The following is a 258-amino-acid chain: Trypsin (258 aa).

A signal peptide spans 1–16 (MIRFTLALAVIGVTFA). A propeptide spans 17 to 29 (ASTPQIETNPNLE) (activation peptide). The Peptidase S1 domain maps to 30–257 (IIGGHDANII…FRDWINEETE (228 aa)). A disulfide bridge links Cys-55 with Cys-71. His-70 serves as the catalytic Charge relay system. Asn-110 is a glycosylation site (N-linked (GlcNAc...) asparagine). Asp-117 functions as the Charge relay system in the catalytic mechanism. 2 N-linked (GlcNAc...) asparagine glycosylation sites follow: Asn-130 and Asn-188. 2 disulfides stabilise this stretch: Cys-182/Cys-197 and Cys-209/Cys-233. Catalysis depends on Ser-213, which acts as the Charge relay system.

The protein belongs to the peptidase S1 family. As to expression, expressed in larval carcasses and gut, and adult gut.

Its subcellular location is the secreted. The enzyme catalyses Preferential cleavage: Arg-|-Xaa, Lys-|-Xaa.. This Phaedon cochleariae (Mustard beetle) protein is Trypsin.